The following is a 331-amino-acid chain: Cilia- and flagella-associated protein 119 (331 aa).

Serine 34 is subject to Phosphoserine. Disordered regions lie at residues 236-271 (LWPE…PEPE) and 309-331 (SSKL…SKTK). Residues 286–317 (VNKELEQLQGLVEERLKASEERLSSKLTALER) adopt a coiled-coil conformation.

Its subcellular location is the cell projection. The protein resides in the cilium. The protein localises to the flagellum. It localises to the cytoplasmic vesicle. It is found in the secretory vesicle. Its subcellular location is the acrosome. The protein resides in the cytoplasm. This chain is Cilia- and flagella-associated protein 119, found in Homo sapiens (Human).